Consider the following 194-residue polypeptide: Outer-membrane lipoprotein LolB (194 aa).

The signal sequence occupies residues 1-18; it reads MTLFLRIFTFGCLLLLAG. Residue cysteine 19 is the site of N-palmitoyl cysteine attachment. The S-diacylglycerol cysteine moiety is linked to residue cysteine 19.

It belongs to the LolB family. In terms of assembly, monomer.

It localises to the cell outer membrane. Its function is as follows. Plays a critical role in the incorporation of lipoproteins in the outer membrane after they are released by the LolA protein. This is Outer-membrane lipoprotein LolB from Aeromonas salmonicida (strain A449).